A 1080-amino-acid polypeptide reads, in one-letter code: MAGENYCSVCEGIISTENDLAVCYKCKEEIFHKACGKKVFDSLRCLNCGPIEKRSLSHQIGEISKGKAKLETRTSRFTGINVTKEFIESGEYGISKGDDDDDGDYVGGDDSSSDDEYFGNPTVLNNYPTTMNNVDLNFPTFFLLNEDMKKRKQKIKEDGNNEEIKKIEQEEKMIIQEYQNEEILKFFGDRSCFKQTQLAYEAMVQCLKDLKESIERMFKVVSVKTLGDISSFISMSYPKKSLLDIRDIALELIGQSIDDSIHHIPTSILYTSSSSPEVAQLFQSVPSNVMMRIKSHQPFSSDISSHLCEPPTITLNPDCCNTFKSTVSTICHSLTKDYDVTKFPSPHFEDLSRWYSNYFSIPLIQEVIELFKQQQQQQQQQQQQQQQQQQQQQQQQQQQQQKDKLEEIMLVRTPVILVIEDFETWNSEVLSDLIHLLSAYRHRIPFVLSFSISTSADAIHKVLPYQVVSLLNLKSLHLRSQNEMFEQLVKHLFLKSQPYIISKKAYLYLYYNFKNSYMSLSTTISVLRHFIIDHFLENGLSYLTLDLSNFQIDLKDDDDDMDGCSTIKLEPENDSTDSTVNDEVGTGDNIDNDNVSTHGEEDTPDSLVKSDIECQTLSYSSDDERNDYDTSTDSDNCSNFHKKKPNSNNRIKSDLECNDNDKDNDDNDNDINENNNNINNNNNNNSNNDDNDKDSFGPKRIPNQRFVTLIQKLPSLNTDEIENSKISTNRKLNKLQSNLIIFKESRPIMLELYYTILSKFQKSKTLKYSELLKKISLNDRKSYETLRKTILTNPESKQSIETLLDLLKTSRHHFERIIKATNSLKLFQTPKSKKYQDLVKIENLILKCRTLSNNFKNLLLPPDEQSKSIKNEIKQQQQQQQQQQQQQQQQQHQQQQKIENEQKNWSIKKKREHQLRNIQKPTDSYFKIYSREFLDDIVSVIIEDYLYPPLVSVPLSEIFDFTQTVFITQSRFNFHTAEGINDNLIHSVRKLKCECCIDSLCGTMDDFSISFILLLRSGRYINYFDWLTSFCSIINGDNNPTPNLKARFIKSVDTFVSLELIKKTRKRKDHFEKIAFLTTS.

Disordered stretches follow at residues 92–112, 566–701, and 869–902; these read YGIS…DDSS, TIKL…PKRI, and IKNE…ENEQ. Basic and acidic residues predominate over residues 651–661; sequence IKSDLECNDND. The span at 662-671 shows a compositional bias: acidic residues; sequence KDNDDNDNDI. Low complexity-rich tracts occupy residues 672 to 688 and 875 to 896; these read NENN…NSNN and QQQQ…QQQQ.

It belongs to the ORC3 family. ORC is composed of six subunits.

It localises to the nucleus. Its function is as follows. Component of the origin recognition complex (ORC) that binds origins of replication. DNA-binding is ATP-dependent, however specific DNA sequences that define origins of replication have not been identified so far. ORC is required to assemble the pre-replication complex necessary to initiate DNA replication. In Dictyostelium discoideum (Social amoeba), this protein is Origin recognition complex subunit 3 (orcC).